The sequence spans 1741 residues: Meiosis regulator and mRNA stability factor 1 (1741 aa).

The region spanning I345–V482 is the NYN domain. 3 disordered regions span residues K594–I636, T659–A678, and L683–K716. A compositionally biased stretch (basic and acidic residues) spans T659 to E668. In terms of domain architecture, RRM spans A788–G867. 8 consecutive HTH OST-type domains span residues S872 to G946, S1000 to P1076, Q1097 to R1171, Q1173 to R1248, R1257 to E1332, Q1333 to K1408, S1409 to T1483, and N1484 to D1558. Over residues K1684–V1700 the composition is skewed to polar residues. The disordered stretch occupies residues K1684–V1727.

It localises to the peroxisome. Functionally, essential regulator of oogenesis required for female meiotic progression to repress transposable elements and preventing their mobilization, which is essential for the germline integrity. The polypeptide is Meiosis regulator and mRNA stability factor 1 (Gallus gallus (Chicken)).